The chain runs to 358 residues: Myb family transcription factor IPN2 (358 aa).

Positions 1 to 20 are disordered; that stretch reads MERMFPPKKPSTMNSHDRPM. Positions 32 to 92 constitute an HTH myb-type domain; it reads TDPKPRLRWT…HLQKFRLGKQ (61 aa). The H-T-H motif DNA-binding region spans 63–88; sequence PKTIMRVMGVKGLTLYHLKSHLQKFR. Positions 127–171 form a coiled coil; sequence NMNEMQIEVQRRLHEQLEVQKHLQLRIEAQGKYMQSILEKAYQTL. Positions 139–144 match the LHEQLE motif; it reads LHEQLE. Positions 310–358 are disordered; sequence IYDSKPEEKKFDASMKLERPSPRRAPLGERMSPMITTGTMAQGRSSPFG. The segment covering 311–330 has biased composition (basic and acidic residues); sequence YDSKPEEKKFDASMKLERPS. A compositionally biased stretch (polar residues) spans 343-358; sequence MITTGTMAQGRSSPFG.

The protein belongs to the MYB-CC family. As to quaternary structure, interacts with NSP2. As to expression, expressed in leaves, stems, nodules and roots.

It localises to the nucleus. In terms of biological role, transcriptional regulator required for Nod-factor-induced gene expression. Transcription activator involved in the induction of NIN and ENOD40 genes, which are required for rhizobial infection and early nodule development. Possesses strong transactivation activity in vitro. Does not seem to contribute to the early steps of the arbuscular mycorrhizal fungus infection and colonization processes in roots. This Lotus japonicus (Lotus corniculatus var. japonicus) protein is Myb family transcription factor IPN2.